Consider the following 238-residue polypeptide: Urease accessory protein UreF (238 aa).

Belongs to the UreF family. UreD, UreF and UreG form a complex that acts as a GTP-hydrolysis-dependent molecular chaperone, activating the urease apoprotein by helping to assemble the nickel containing metallocenter of UreC. The UreE protein probably delivers the nickel.

Its subcellular location is the cytoplasm. Functionally, required for maturation of urease via the functional incorporation of the urease nickel metallocenter. The sequence is that of Urease accessory protein UreF from Delftia acidovorans (strain DSM 14801 / SPH-1).